The sequence spans 418 residues: UDP-N-acetylglucosamine 1-carboxyvinyltransferase (418 aa).

Position 22-23 (22-23 (KN)) interacts with phosphoenolpyruvate. Arg-92 contributes to the UDP-N-acetyl-alpha-D-glucosamine binding site. Cys-116 serves as the catalytic Proton donor. Cys-116 carries the post-translational modification 2-(S-cysteinyl)pyruvic acid O-phosphothioketal. Residues Asp-305 and Ile-327 each contribute to the UDP-N-acetyl-alpha-D-glucosamine site.

The protein belongs to the EPSP synthase family. MurA subfamily.

It is found in the cytoplasm. It catalyses the reaction phosphoenolpyruvate + UDP-N-acetyl-alpha-D-glucosamine = UDP-N-acetyl-3-O-(1-carboxyvinyl)-alpha-D-glucosamine + phosphate. It functions in the pathway cell wall biogenesis; peptidoglycan biosynthesis. In terms of biological role, cell wall formation. Adds enolpyruvyl to UDP-N-acetylglucosamine. In Gluconobacter oxydans (strain 621H) (Gluconobacter suboxydans), this protein is UDP-N-acetylglucosamine 1-carboxyvinyltransferase.